A 269-amino-acid chain; its full sequence is Phosphoribosylformylglycinamidine synthase subunit PurQ (269 aa).

One can recognise a Glutamine amidotransferase type-1 domain in the interval 5-262; sequence VLVMSGYGIN…IESNLQIFKN (258 aa). Cysteine 95 (nucleophile) is an active-site residue. Active-site residues include histidine 222, glutamate 224, and glutamate 232.

As to quaternary structure, part of the FGAM synthase complex composed of 1 PurL, 1 PurQ and 2 PurS subunits.

It is found in the cytoplasm. It carries out the reaction N(2)-formyl-N(1)-(5-phospho-beta-D-ribosyl)glycinamide + L-glutamine + ATP + H2O = 2-formamido-N(1)-(5-O-phospho-beta-D-ribosyl)acetamidine + L-glutamate + ADP + phosphate + H(+). The enzyme catalyses L-glutamine + H2O = L-glutamate + NH4(+). Its pathway is purine metabolism; IMP biosynthesis via de novo pathway; 5-amino-1-(5-phospho-D-ribosyl)imidazole from N(2)-formyl-N(1)-(5-phospho-D-ribosyl)glycinamide: step 1/2. Functionally, part of the phosphoribosylformylglycinamidine synthase complex involved in the purines biosynthetic pathway. Catalyzes the ATP-dependent conversion of formylglycinamide ribonucleotide (FGAR) and glutamine to yield formylglycinamidine ribonucleotide (FGAM) and glutamate. The FGAM synthase complex is composed of three subunits. PurQ produces an ammonia molecule by converting glutamine to glutamate. PurL transfers the ammonia molecule to FGAR to form FGAM in an ATP-dependent manner. PurS interacts with PurQ and PurL and is thought to assist in the transfer of the ammonia molecule from PurQ to PurL. The polypeptide is Phosphoribosylformylglycinamidine synthase subunit PurQ (Methanococcus maripaludis (strain C5 / ATCC BAA-1333)).